The chain runs to 290 residues: Shikimate dehydrogenase (NADP(+)) (290 aa).

Residues 24-26 (SKS) and threonine 71 contribute to the shikimate site. Lysine 75 serves as the catalytic Proton acceptor. Shikimate contacts are provided by asparagine 96 and aspartate 111. NADP(+)-binding positions include 135-139 (GAGGA), 159-164 (NRTKQR), and isoleucine 228. Shikimate is bound at residue tyrosine 230. An NADP(+)-binding site is contributed by glycine 251.

The protein belongs to the shikimate dehydrogenase family. Homodimer.

It catalyses the reaction shikimate + NADP(+) = 3-dehydroshikimate + NADPH + H(+). The protein operates within metabolic intermediate biosynthesis; chorismate biosynthesis; chorismate from D-erythrose 4-phosphate and phosphoenolpyruvate: step 4/7. In terms of biological role, involved in the biosynthesis of the chorismate, which leads to the biosynthesis of aromatic amino acids. Catalyzes the reversible NADPH linked reduction of 3-dehydroshikimate (DHSA) to yield shikimate (SA). The chain is Shikimate dehydrogenase (NADP(+)) from Bartonella tribocorum (strain CIP 105476 / IBS 506).